A 422-amino-acid polypeptide reads, in one-letter code: UDP-N-acetylglucosamine 1-carboxyvinyltransferase (422 aa).

A phosphoenolpyruvate-binding site is contributed by Lys-22–Asn-23. Residue Arg-94 coordinates UDP-N-acetyl-alpha-D-glucosamine. Residue Cys-118 is the Proton donor of the active site. Cys-118 is modified (2-(S-cysteinyl)pyruvic acid O-phosphothioketal). Residues Arg-123 to Leu-127, Lys-163 to Val-166, Asp-308, and Ile-330 contribute to the UDP-N-acetyl-alpha-D-glucosamine site.

This sequence belongs to the EPSP synthase family. MurA subfamily.

The protein resides in the cytoplasm. It carries out the reaction phosphoenolpyruvate + UDP-N-acetyl-alpha-D-glucosamine = UDP-N-acetyl-3-O-(1-carboxyvinyl)-alpha-D-glucosamine + phosphate. The protein operates within cell wall biogenesis; peptidoglycan biosynthesis. Functionally, cell wall formation. Adds enolpyruvyl to UDP-N-acetylglucosamine. This chain is UDP-N-acetylglucosamine 1-carboxyvinyltransferase, found in Yersinia enterocolitica serotype O:8 / biotype 1B (strain NCTC 13174 / 8081).